Consider the following 173-residue polypeptide: Peptide deformylase (173 aa).

Cysteine 94 and histidine 136 together coordinate Fe cation. Glutamate 137 is a catalytic residue. Histidine 140 serves as a coordination point for Fe cation.

This sequence belongs to the polypeptide deformylase family. The cofactor is Fe(2+).

It catalyses the reaction N-terminal N-formyl-L-methionyl-[peptide] + H2O = N-terminal L-methionyl-[peptide] + formate. Its function is as follows. Removes the formyl group from the N-terminal Met of newly synthesized proteins. Requires at least a dipeptide for an efficient rate of reaction. N-terminal L-methionine is a prerequisite for activity but the enzyme has broad specificity at other positions. This is Peptide deformylase from Desulfosudis oleivorans (strain DSM 6200 / JCM 39069 / Hxd3) (Desulfococcus oleovorans).